Consider the following 151-residue polypeptide: Neuroglobin (151 aa).

The region spanning M1–D149 is the Globin domain. The cysteines at positions 46 and 55 are disulfide-linked. 2 residues coordinate heme b: H64 and H96.

The protein belongs to the globin family. In terms of assembly, monomer. Homodimer and homotetramer; disulfide-linked. Mainly monomeric but also detected as part of homodimers and homotetramers. Interacts with 14-3-3 proteins; regulates the phosphorylation of NGB. Could interact (ferrous form) with G-alpha(i) proteins (GTP-bound form). Phosphorylated during hypoxia by ERK1/ERK2. Phosphorylation regulates the heme pocket hexacoordination preventing the association of His-64 with the heme metal center. Thereby, promotes the access of dioxygen and nitrite to the heme and stimulates the nitrite reductase activity. Phosphorylation during hypoxia is stabilized by 14-3-3 proteins. In terms of processing, an intramolecular Cys-46/Cys-55 disulfide bond, not necessarily present in orthologs, regulates the heme pocket hexacoordination preventing the association of His-64 with the heme metal center. Thereby, promotes the access of dioxygen and nitrite to the heme and stimulates the nitrite reductase activity. In terms of tissue distribution, predominantly expressed in brain, the strongest expression is seen in the frontal lobe, the subthalamic nucleus and the thalamus.

The protein localises to the cytoplasm. Its subcellular location is the cytosol. The protein resides in the mitochondrion matrix. It catalyses the reaction Fe(III)-heme b-[protein] + nitric oxide + H2O = Fe(II)-heme b-[protein] + nitrite + 2 H(+). Monomeric globin with a bis-histidyl six-coordinate heme-iron atom through which it can bind dioxygen, carbon monoxide and nitric oxide. Could help transport oxygen and increase its availability to the metabolically active neuronal tissues, though its low quantity in tissues as well as its high affinity for dioxygen, which may limit its oxygen-releasing ability, argue against it. The ferrous/deoxygenated form exhibits a nitrite reductase activity and it could produce nitric oxide which in turn inhibits cellular respiration in response to hypoxia. In its ferrous/deoxygenated state, it may also exhibit GDI (Guanine nucleotide Dissociation Inhibitor) activity toward heterotrimeric G-alpha proteins, thereby regulating signal transduction to facilitate neuroprotective responses in the wake of hypoxia and associated oxidative stress. The chain is Neuroglobin from Homo sapiens (Human).